We begin with the raw amino-acid sequence, 1220 residues long: von Willebrand factor A domain-containing protein 5B1 (1220 aa).

An N-terminal signal peptide occupies residues 1 to 18 (MPGLLNWITGAALPLTAS). The region spanning 19–149 (DVTSCVSGYA…NVTIFISTSS (131 aa)) is the VIT domain. An N-linked (GlcNAc...) asparagine glycan is attached at N140. A VWFA domain is found at 361-529 (EFIFLIDRSS…RLQPKMVKSL (169 aa)). N650 is a glycosylation site (N-linked (GlcNAc...) asparagine). Residues 715–807 (NSGQDLNQGP…SPSRPATPAP (93 aa)) are disordered. Positions 757–774 (VRERTSDSRSPGDLEPSH) are enriched in basic and acidic residues. The segment covering 796 to 807 (RASPSRPATPAP) has biased composition (low complexity). A Phosphotyrosine modification is found at Y881. Disordered stretches follow at residues 937-962 (RGTSSGFGRPQTMLGEDSAPGNGKFQ) and 976-995 (EARSPGREKHGASEGPQRSL). N-linked (GlcNAc...) asparagine glycosylation is present at N1017. The segment covering 1093–1111 (TTRPSESKTPSPQLCTSSP) has biased composition (polar residues). Residues 1093–1115 (TTRPSESKTPSPQLCTSSPPRHP) are disordered.

The protein localises to the secreted. This Homo sapiens (Human) protein is von Willebrand factor A domain-containing protein 5B1 (VWA5B1).